Reading from the N-terminus, the 62-residue chain is Small ribosomal subunit protein eS27 (62 aa).

Zn(2+) is bound by residues C17, C20, C36, and C39. The segment at 17-39 (CPDCENEQIIFEKASTVVDCVVC) adopts a C4-type zinc-finger fold.

This sequence belongs to the eukaryotic ribosomal protein eS27 family. In terms of assembly, part of the 30S ribosomal subunit. It depends on Zn(2+) as a cofactor.

In Methanosphaerula palustris (strain ATCC BAA-1556 / DSM 19958 / E1-9c), this protein is Small ribosomal subunit protein eS27.